Reading from the N-terminus, the 262-residue chain is Acyl-[acyl-carrier-protein]--UDP-N-acetylglucosamine O-acyltransferase (262 aa).

It belongs to the transferase hexapeptide repeat family. LpxA subfamily. As to quaternary structure, homotrimer.

The protein resides in the cytoplasm. It catalyses the reaction a (3R)-hydroxyacyl-[ACP] + UDP-N-acetyl-alpha-D-glucosamine = a UDP-3-O-[(3R)-3-hydroxyacyl]-N-acetyl-alpha-D-glucosamine + holo-[ACP]. Its pathway is glycolipid biosynthesis; lipid IV(A) biosynthesis; lipid IV(A) from (3R)-3-hydroxytetradecanoyl-[acyl-carrier-protein] and UDP-N-acetyl-alpha-D-glucosamine: step 1/6. Its function is as follows. Involved in the biosynthesis of lipid A, a phosphorylated glycolipid that anchors the lipopolysaccharide to the outer membrane of the cell. The chain is Acyl-[acyl-carrier-protein]--UDP-N-acetylglucosamine O-acyltransferase from Janthinobacterium sp. (strain Marseille) (Minibacterium massiliensis).